The primary structure comprises 217 residues: Somatotropin (217 aa).

A signal peptide spans 1-26; that stretch reads MAPGSRTSLLLAFGLLCLPWLQEGSA. His-44 lines the Zn(2+) pocket. Residues Cys-79 and Cys-191 are joined by a disulfide bond. Residue Ser-132 is modified to Phosphoserine. Glu-200 provides a ligand contact to Zn(2+). Residues Cys-208 and Cys-215 are joined by a disulfide bond.

The protein belongs to the somatotropin/prolactin family.

It is found in the secreted. Its function is as follows. Plays an important role in growth control. Its major role in stimulating body growth is to stimulate the liver and other tissues to secrete IGF1. It stimulates both the differentiation and proliferation of myoblasts. It also stimulates amino acid uptake and protein synthesis in muscle and other tissues. The chain is Somatotropin (GH1) from Pan troglodytes (Chimpanzee).